The sequence spans 213 residues: Uridine kinase (213 aa).

14–21 (GASASGKS) lines the ATP pocket.

This sequence belongs to the uridine kinase family.

The protein resides in the cytoplasm. It carries out the reaction uridine + ATP = UMP + ADP + H(+). The catalysed reaction is cytidine + ATP = CMP + ADP + H(+). The protein operates within pyrimidine metabolism; CTP biosynthesis via salvage pathway; CTP from cytidine: step 1/3. Its pathway is pyrimidine metabolism; UMP biosynthesis via salvage pathway; UMP from uridine: step 1/1. The sequence is that of Uridine kinase from Vibrio parahaemolyticus serotype O3:K6 (strain RIMD 2210633).